The sequence spans 141 residues: Hemoglobin subunit alpha-A (141 aa).

The region spanning valine 1–arginine 141 is the Globin domain. O2 is bound at residue histidine 58. Heme b is bound at residue histidine 87.

The protein belongs to the globin family. Heterotetramer of two alpha chains and two beta chains. As to expression, red blood cells.

In terms of biological role, involved in oxygen transport from the lung to the various peripheral tissues. The polypeptide is Hemoglobin subunit alpha-A (HBAA) (Struthio camelus (Common ostrich)).